Reading from the N-terminus, the 1444-residue chain is Rho GTPase-activating protein 31 (1444 aa).

Positions 21–216 (CDLTEYLESS…FILNHVDQIF (196 aa)) constitute a Rho-GAP domain. Ser272 carries the phosphoserine modification. At Thr286 the chain carries Phosphothreonine. Ser346, Ser349, and Ser387 each carry phosphoserine. The tract at residues 398-427 (WGQEGMPPGAEGGFDVSSDRSHLQGAQARP) is disordered. Residue Ser476 is modified to Phosphoserine. A disordered region spans residues 504 to 631 (TNSTPCRTPP…ESSTLQESPR (128 aa)). A compositionally biased stretch (low complexity) spans 515–534 (ELQSLSSLEEFSFHGSESGG). Positions 600–619 (NELEKRPNPEKVVEEGREAG) are enriched in basic and acidic residues. The residue at position 679 (Thr679) is a Phosphothreonine. Disordered regions lie at residues 688–893 (SSLG…EDDT) and 906–1108 (EPWE…SSLN). Phosphoserine is present on residues Ser701 and Ser712. Over residues 722 to 734 (PANQSTQGASTAA) the composition is skewed to polar residues. A compositionally biased stretch (basic and acidic residues) spans 735 to 745 (SREKPEPEQGL). The span at 777-790 (LSPPLPPAPPPPTP) shows a compositional bias: pro residues. Residue Ser778 is modified to Phosphoserine. Thr789 carries the phosphothreonine modification. Residues 803–817 (GPEREDSSRKLRTDL) show a composition bias toward basic and acidic residues. Residues 822 to 834 (LKSQDSPEISSLC) are compositionally biased toward polar residues. Positions 839 to 848 (ATPRHSDKQN) are enriched in basic and acidic residues. Over residues 960–977 (TVKSQWTLEVPSSSSCAN) the composition is skewed to polar residues. Ser974 carries the post-translational modification Phosphoserine. Residues 992-1008 (PRREITGWDEKALRSFR) show a composition bias toward basic and acidic residues. The segment covering 1028–1038 (VQPNPAETSPI) has biased composition (polar residues). Low complexity predominate over residues 1064–1075 (GPESSKESSPSV). Phosphoserine is present on residues Ser1105, Ser1106, and Ser1178. 2 stretches are compositionally biased toward polar residues: residues 1211–1224 (QIPQPLPSQSSGEN) and 1234–1245 (EGPSSTSGTTQK). Residues 1211–1346 (QIPQPLPSQS…HRSRPGRPQS (136 aa)) form a disordered region. Residues 1246-1265 (PAKDDSPSSLESSKEEKPKQ) are compositionally biased toward basic and acidic residues. 2 stretches are compositionally biased toward polar residues: residues 1292 to 1303 (PGSSNLLSTQDA) and 1314 to 1323 (TEPSGDNLLS).

In terms of assembly, interacts with ITSN1, which inhibits GAP activity. Interacts with PARVA. Interacts with GTP-loaded RHOU. Phosphorylation on Thr-789 reduces GAP activity.

Its subcellular location is the cell projection. The protein resides in the lamellipodium. The protein localises to the cell junction. It is found in the focal adhesion. Functionally, functions as a GTPase-activating protein (GAP) for RAC1 and CDC42. Required for cell spreading, polarized lamellipodia formation and cell migration. The sequence is that of Rho GTPase-activating protein 31 (ARHGAP31) from Homo sapiens (Human).